We begin with the raw amino-acid sequence, 245 residues long: Carboxymethylenebutenolidase homolog (245 aa).

Ala2 carries the post-translational modification N-acetylalanine. Residues Cys132, Asp179, and His212 contribute to the active site. Ser223 carries the post-translational modification Phosphoserine.

This sequence belongs to the dienelactone hydrolase family.

It localises to the cytoplasm. The protein localises to the cytosol. Its function is as follows. Cysteine hydrolase. This chain is Carboxymethylenebutenolidase homolog (Cmbl), found in Rattus norvegicus (Rat).